Here is a 931-residue protein sequence, read N- to C-terminus: Protein unc-45 homolog B (931 aa).

3 TPR repeats span residues 6–39, 43–76, and 77–110; these read AAQL…TKDK, ATLY…NSAD, and IKAL…EPRN. 3 ARM repeats span residues 169 to 208, 211 to 250, and 751 to 790; these read EAGA…GMCS, RARA…AIID, and DKLR…NMVL.

In terms of assembly, interacts with HSP90 in an ATP-independent manner. Interacts with UBE4B; the interaction may target UNC45B for proteasomal degradation. In terms of tissue distribution, highly expressed in adult skeletal muscle and heart. Detected at intermediate levels in lung. Highly expressed in embryonic heart.

Its subcellular location is the cytoplasm. It localises to the myofibril. The protein localises to the sarcomere. It is found in the z line. The protein resides in the a band. Its subcellular location is the perinuclear region. It localises to the cytosol. In terms of biological role, acts as a co-chaperone for HSP90 and is required for proper folding of the myosin motor domain. Plays a role in sarcomere formation during muscle cell development. Is necessary for normal early lens development. The chain is Protein unc-45 homolog B (Unc45b) from Mus musculus (Mouse).